We begin with the raw amino-acid sequence, 230 residues long: Orotidine 5'-phosphate decarboxylase (230 aa).

Substrate is bound by residues Asp-10, Lys-32, 59–68, Thr-119, Arg-180, Gln-189, Gly-209, and Arg-210; that span reads DLKYHDIPNT. The active-site Proton donor is the Lys-61.

Belongs to the OMP decarboxylase family. Type 1 subfamily. As to quaternary structure, homodimer.

It catalyses the reaction orotidine 5'-phosphate + H(+) = UMP + CO2. The protein operates within pyrimidine metabolism; UMP biosynthesis via de novo pathway; UMP from orotate: step 2/2. Functionally, catalyzes the decarboxylation of orotidine 5'-monophosphate (OMP) to uridine 5'-monophosphate (UMP). The sequence is that of Orotidine 5'-phosphate decarboxylase from Glaesserella parasuis serovar 5 (strain SH0165) (Haemophilus parasuis).